The primary structure comprises 428 residues: Cytochrome c biogenesis protein CcsB (428 aa).

The next 3 membrane-spanning stretches (helical) occupy residues 14–34 (LRFA…GTFI), 72–92 (SFWF…CSFR), and 162–182 (IGPL…AYGS).

Belongs to the Ccs1/CcsB family. In terms of assembly, may interact with CcsA.

Its subcellular location is the cellular thylakoid membrane. Functionally, required during biogenesis of c-type cytochromes (cytochrome c6 and cytochrome f) at the step of heme attachment. The protein is Cytochrome c biogenesis protein CcsB of Prochlorococcus marinus (strain AS9601).